The chain runs to 90 residues: Putative membrane protein insertion efficiency factor (90 aa).

It belongs to the UPF0161 family.

It localises to the cell membrane. Could be involved in insertion of integral membrane proteins into the membrane. This Lactococcus lactis subsp. cremoris (strain MG1363) protein is Putative membrane protein insertion efficiency factor.